Consider the following 3343-residue polypeptide: Breast cancer type 2 susceptibility protein homolog (3343 aa).

The interaction with PALB2 stretch occupies residues 1–40; it reads MTVEYKRRPTFWEIFKARCSTADLGPISLNWFEELFSEAP. Residues 40 to 60 form a disordered region; it reads PPYNTEHPEESEYKPQGHEPQ. Residues 45 to 56 show a composition bias toward basic and acidic residues; sequence EHPEESEYKPQG. Ser-70 is subject to Phosphoserine. A disordered region spans residues 348 to 381; sequence IEPRDSEPLDPSVTNQKPLYSQSGDISSEAGQCS. Residues 359-381 show a composition bias toward polar residues; it reads SVTNQKPLYSQSGDISSEAGQCS. A phosphoserine mark is found at Ser-475 and Ser-736. The interaction with NPM1 stretch occupies residues 622–982; sequence PDSSIKRSNL…DKWSEFLDPL (361 aa). BRCA2 repeat units follow at residues 984–1018, 1197–1231, 1405–1439, 1503–1537, 1645–1669, 1828–1845, 1939–1973, and 2019–2053; these read NHKL…DIEE, KEME…DIEN, MKEF…QETE, KEPT…ETQY, CYTG…WLRE, FITT…IFTD, PSRT…EIDG, and SSFV…EFDL. The interaction with RAD51 stretch occupies residues 985–2050; sequence HKLGGSFRTA…LHKVKGMLEE (1066 aa). 3 disordered regions span residues 2059–2138, 2297–2356, and 2377–2407; these read TLQH…VLGT, PFCS…SDKS, and DSKN…PQFN. The residue at position 2063 (Ser-2063) is a Phosphoserine. 2 stretches are compositionally biased toward polar residues: residues 2083–2094 and 2101–2125; these read PEYSVSSKLQKT and SPSN…QLSQ. Residues 2233–2300 are interaction with HSF2BP; sequence RKRGGMAGVA…EPVTCGPFCS (68 aa). 2 stretches are compositionally biased toward polar residues: residues 2307–2320 and 2332–2342; these read TQSP…QGLQ and GKSSSNPTVSA. An interaction with FANCD2 region spans residues 2313 to 2475; sequence TSPAQGLQSK…SPKQLYMYGV (163 aa). Over residues 2344–2356 the composition is skewed to basic and acidic residues; the sequence is RSERTRHSVSDKS. Residues 2411 to 2762 form an interaction with SEM1 region; it reads MSSLQNARDL…QRVYPLQWVE (352 aa). The Nuclear export signal; masked by interaction with SEM1 signature appears at 2612–2628; it reads AAKTLVLCVSDIISLST. The segment at 3114 to 3163 is disordered; sequence DSPKWSTPNKDPTREPYPASTCSASDLASGGQLPRSSPTDQQSYRSPLSC. Residues 3147–3163 are compositionally biased toward polar residues; sequence PRSSPTDQQSYRSPLSC. Ser-3222 is subject to Phosphoserine; by CDK1 and CDK2. Disordered regions lie at residues 3231 to 3255 and 3289 to 3343; these read PPRS…WSRA and VGGS…PDYS. A Phosphoserine modification is found at Ser-3250. Residues 3295–3310 show a composition bias toward polar residues; the sequence is VFPSDSTRTEGPSAST. The segment covering 3318–3334 has biased composition (basic and acidic residues); it reads SKRESLRDCRDDSDGKL.

As to quaternary structure, monomer and dimer. Interacts with RAD51; regulates RAD51 recruitment and function at sites of DNA repair. Interacts with SEM1, WDR16, USP11, DMC1, ROCK2 and NPM1. Interacts with both nonubiquitinated and monoubiquitinated FANCD2; this complex also includes XRCC3 and phosphorylated FANCG. Part of a BRCA complex containing BRCA1, BRCA2 and PALB2. Component of the homologous recombination repair (HR) complex composed of ERCC5/XPG, BRCA2, PALB2, DSS1 and RAD51. Within the complex, interacts with ERCC5/XPG and PALB2. Interacts directly with PALB2 which may serve as a scaffold for a HR complex containing PALB2, BRCA2, RAD51C, RAD51 and XRCC3. Interacts with BRCA1 only in the presence of PALB2 which serves as the bridging protein. Interacts with POLH; the interaction is direct. Interacts with the TREX-2 complex subunits PCID2 and SEM1. Interacts with HSF2BP and BRME1; the interaction with HSF2BP is direct and allows the formation of a ternary complex. The complex BRME1:HSF2BP:BRCA2 interacts with SPATA22, MEIOB and RAD51. Phosphorylated by ATM upon irradiation-induced DNA damage. Phosphorylation by CHEK1 and CHEK2 regulates interaction with RAD51. Phosphorylation at Ser-3222 by CDK1 and CDK2 is low in S phase when recombination is active, but increases as cells progress towards mitosis; this phosphorylation prevents homologous recombination-dependent repair during S phase and G2 by inhibiting RAD51 binding. Post-translationally, ubiquitinated in the absence of DNA damage; this does not lead to proteasomal degradation. In contrast, ubiquitination in response to DNA damage leads to proteasomal degradation. Highest expression in testis. Also expressed in spleen, skeletal muscle, thymus, mammary gland, heart, ovary, prostate, liver, lung, kidney and brain.

The protein resides in the nucleus. It is found in the cytoplasm. Its subcellular location is the cytoskeleton. The protein localises to the microtubule organizing center. It localises to the centrosome. Its function is as follows. Involved in double-strand break repair and/or homologous recombination. Binds RAD51 and potentiates recombinational DNA repair by promoting assembly of RAD51 onto single-stranded DNA (ssDNA). Acts by targeting RAD51 to ssDNA over double-stranded DNA, enabling RAD51 to displace replication protein-A (RPA) from ssDNA and stabilizing RAD51-ssDNA filaments by blocking ATP hydrolysis. Part of a PALB2-scaffolded HR complex containing RAD51C and which is thought to play a role in DNA repair by HR. May participate in S phase checkpoint activation. Binds selectively to ssDNA, and to ssDNA in tailed duplexes and replication fork structures. May play a role in the extension step after strand invasion at replication-dependent DNA double-strand breaks; together with PALB2 is involved in both POLH localization at collapsed replication forks and DNA polymerization activity. In concert with NPM1, regulates centrosome duplication. Interacts with the TREX-2 complex (transcription and export complex 2) subunits PCID2 and SEM1, and is required to prevent R-loop-associated DNA damage and thus transcription-associated genomic instability, independently of its known role in homologous recombination. This chain is Breast cancer type 2 susceptibility protein homolog, found in Rattus norvegicus (Rat).